The primary structure comprises 603 residues: Grainyhead-like protein 3 homolog (603 aa).

The segment at Glu30 to Asp95 is transcription activation. The 236-residue stretch at Gly226 to Ile461 folds into the Grh/CP2 DB domain.

This sequence belongs to the grh/CP2 family. Grainyhead subfamily. In terms of assembly, homodimer, also forms heterodimers with GRHL1 and GRHL2. Interacts with LMO4.

The protein resides in the nucleus. Transcription factor playing important roles in primary neurulation and in the differentiation of stratified epithelia of both ectodermal and endodermal origin. Binds directly to the consensus DNA sequence 5'-AACCGGTT-3' acting as an activator and repressor on distinct target genes. Essential for epidermal differentiation and barrier formation at the end of embryogenesis with TGM3 as critical direct target. Exhibits functional redundancy with GRHL2 in epidermal morphogenetic events such as eyelid fusion and epidermal wound repair. Despite being dispensable during normal epidermal homeostasis in the adulthood, is again required for barrier repair after immune-mediated epidermal damage, regulates distinct gene batteries in embryonic epidermal differentiation and adult epidermal barrier reformation after injury. Plays unique and cooperative roles with GRHL2 in establishing distinct zones of primary neurulation. Essential for spinal closure, functions cooperatively with GRHL2 in closure 2 (forebrain/midbrain boundary) and posterior neuropore closure. Also required for proper development of the oral periderm. No genetic interaction with GRHL1, no functional cooperativity due to diverse target gene selectivity. The chain is Grainyhead-like protein 3 homolog from Mus musculus (Mouse).